The sequence spans 470 residues: Asparagine--tRNA ligase (470 aa).

It belongs to the class-II aminoacyl-tRNA synthetase family. Homodimer.

It is found in the cytoplasm. The catalysed reaction is tRNA(Asn) + L-asparagine + ATP = L-asparaginyl-tRNA(Asn) + AMP + diphosphate + H(+). This Blochmanniella pennsylvanica (strain BPEN) protein is Asparagine--tRNA ligase.